Here is a 259-residue protein sequence, read N- to C-terminus: Type III pantothenate kinase (259 aa).

ATP is bound at residue 6–13; it reads DVGNTNCT. Position 107 to 110 (107 to 110) interacts with substrate; it reads GSDR. Catalysis depends on Asp-109, which acts as the Proton acceptor. A K(+)-binding site is contributed by Asp-129. Thr-132 contributes to the ATP binding site. Thr-184 is a binding site for substrate.

It belongs to the type III pantothenate kinase family. As to quaternary structure, homodimer. NH4(+) serves as cofactor. It depends on K(+) as a cofactor.

The protein resides in the cytoplasm. It catalyses the reaction (R)-pantothenate + ATP = (R)-4'-phosphopantothenate + ADP + H(+). It functions in the pathway cofactor biosynthesis; coenzyme A biosynthesis; CoA from (R)-pantothenate: step 1/5. Its function is as follows. Catalyzes the phosphorylation of pantothenate (Pan), the first step in CoA biosynthesis. This Listeria monocytogenes serotype 4b (strain CLIP80459) protein is Type III pantothenate kinase.